We begin with the raw amino-acid sequence, 582 residues long: MKLRCPAAYGTSHVDDANMKKLRSRITTDGLDRAPHRAFMRAMGLDDAAIAKPMVGIVSMKGEQTPCNMTHDFQVAAAKTGIEEAGGTPREFSTVSVSDGISMNHEGMKFSLFSRELIADSIEAVVHGLAYDALIGYGGCDKTLPGVMMGMVRCNVPSIFIYGGSSLPGRVDGRTLTVLDSYEAVGSFMTGEIDSATLERIERACLPTIGACAGQFTANTMGMVSEAMGLTIPNVSMVPGVYAERAQISRRAGRLIMEMLERGGPLPRDIVTRKSLENGAAIVAATGGSTNAALHLPAIANEAGIAFTIDDVGEVFARTPLIGNLRPGGKYTAKDVHDIGGAAVVIQELIRTGHIDGNCITITGRTLAEEYGAANAPDGEVVYAASAPIMPDGGVAVLKGNLCPDGAVIKVAGLKSQFFEGVARVFEDEEACVAAVRDRSYKAGEVLVIRNEGPVGGPGMREMLGVTALIYGQGMGEKVALITDGRFSGATRGMCIGYVSPEAFVGGPLALVRDGDKIRIDATNRRMDMLVDEPELAARRRDWKPRPPRHRAGALAKYARLVGQAPGGAVTHEGPAEWPWFE.

C67 contacts [2Fe-2S] cluster. D99 is a binding site for Mg(2+). Residue C140 coordinates [2Fe-2S] cluster. Mg(2+) is bound by residues D141 and K142. Residue K142 is modified to N6-carboxylysine. C212 lines the [2Fe-2S] cluster pocket. Position 462 (E462) interacts with Mg(2+). S488 acts as the Proton acceptor in catalysis.

The protein belongs to the IlvD/Edd family. In terms of assembly, homodimer. The cofactor is [2Fe-2S] cluster. Mg(2+) serves as cofactor.

It catalyses the reaction (2R)-2,3-dihydroxy-3-methylbutanoate = 3-methyl-2-oxobutanoate + H2O. It carries out the reaction (2R,3R)-2,3-dihydroxy-3-methylpentanoate = (S)-3-methyl-2-oxopentanoate + H2O. It participates in amino-acid biosynthesis; L-isoleucine biosynthesis; L-isoleucine from 2-oxobutanoate: step 3/4. The protein operates within amino-acid biosynthesis; L-valine biosynthesis; L-valine from pyruvate: step 3/4. Functions in the biosynthesis of branched-chain amino acids. Catalyzes the dehydration of (2R,3R)-2,3-dihydroxy-3-methylpentanoate (2,3-dihydroxy-3-methylvalerate) into 2-oxo-3-methylpentanoate (2-oxo-3-methylvalerate) and of (2R)-2,3-dihydroxy-3-methylbutanoate (2,3-dihydroxyisovalerate) into 2-oxo-3-methylbutanoate (2-oxoisovalerate), the penultimate precursor to L-isoleucine and L-valine, respectively. The chain is Dihydroxy-acid dehydratase 3 from Bradyrhizobium diazoefficiens (strain JCM 10833 / BCRC 13528 / IAM 13628 / NBRC 14792 / USDA 110).